The following is a 291-amino-acid chain: ATP synthase gamma chain (291 aa).

The protein belongs to the ATPase gamma chain family. F-type ATPases have 2 components, CF(1) - the catalytic core - and CF(0) - the membrane proton channel. CF(1) has five subunits: alpha(3), beta(3), gamma(1), delta(1), epsilon(1). CF(0) has three main subunits: a, b and c.

Its subcellular location is the cell membrane. Its function is as follows. Produces ATP from ADP in the presence of a proton gradient across the membrane. The gamma chain is believed to be important in regulating ATPase activity and the flow of protons through the CF(0) complex. The chain is ATP synthase gamma chain from Lachnoclostridium phytofermentans (strain ATCC 700394 / DSM 18823 / ISDg) (Clostridium phytofermentans).